A 574-amino-acid polypeptide reads, in one-letter code: Septation ring formation regulator EzrA (574 aa).

The Extracellular portion of the chain corresponds to 1-7 (MSSGIIL). Residues 8-26 (LIVAIVLLVIIAYLVGVII) traverse the membrane as a helical segment. The Cytoplasmic segment spans residues 27–574 (RKRNDSLITS…YEKTREHIRF (548 aa)). Coiled-coil stretches lie at residues 102-141 (NFIR…EEKN), 274-350 (ELVT…ETES), and 459-520 (QLEA…SFEA).

Belongs to the EzrA family.

It localises to the cell membrane. In terms of biological role, negative regulator of FtsZ ring formation; modulates the frequency and position of FtsZ ring formation. Inhibits FtsZ ring formation at polar sites. Interacts either with FtsZ or with one of its binding partners to promote depolymerization. This Streptococcus pyogenes serotype M3 (strain SSI-1) protein is Septation ring formation regulator EzrA.